The sequence spans 352 residues: ATP synthase subunit a 2 (352 aa).

The first 26 residues, 1–26 (MRKKAISRILALVVPVLLSLNSQAFA), serve as a signal peptide directing secretion. Transmembrane regions (helical) follow at residues 112-132 (VVMIWLAAILLVVIASAAGAS), 172-192 (FLPYLLTVFFFILVCNLLGLI), 195-215 (GATATGNINVTLTLSVFTFVI), 232-252 (HLTAGTHWALWIIMVPIEILG), 264-284 (LFANMTAGHIIILSLFFISFI), 289-309 (IVAVAVSIPFAIFIYLLELFV), and 310-330 (AFLQAYVFTMLSALFIGLATA).

The protein belongs to the ATPase A chain family. In terms of assembly, F-type ATPases have 2 components, CF(1) - the catalytic core - and CF(0) - the membrane proton channel. CF(1) has five subunits: alpha(3), beta(3), gamma(1), delta(1), epsilon(1). CF(0) has four main subunits: a, b, b' and c.

It is found in the cell inner membrane. Key component of the proton channel; it plays a direct role in the translocation of protons across the membrane. The chain is ATP synthase subunit a 2 from Chlorobaculum tepidum (strain ATCC 49652 / DSM 12025 / NBRC 103806 / TLS) (Chlorobium tepidum).